The primary structure comprises 379 residues: 3-dehydroquinate synthase (379 aa).

NAD(+) contacts are provided by residues glycine 113–aspartate 117, threonine 137–serine 138, lysine 150, and lysine 159. Zn(2+) is bound by residues glutamate 192, histidine 256, and histidine 274.

Belongs to the sugar phosphate cyclases superfamily. Dehydroquinate synthase family. Co(2+) serves as cofactor. Zn(2+) is required as a cofactor. The cofactor is NAD(+).

It is found in the cytoplasm. The catalysed reaction is 7-phospho-2-dehydro-3-deoxy-D-arabino-heptonate = 3-dehydroquinate + phosphate. Its pathway is metabolic intermediate biosynthesis; chorismate biosynthesis; chorismate from D-erythrose 4-phosphate and phosphoenolpyruvate: step 2/7. Its function is as follows. Catalyzes the conversion of 3-deoxy-D-arabino-heptulosonate 7-phosphate (DAHP) to dehydroquinate (DHQ). In Zymomonas mobilis subsp. mobilis (strain ATCC 31821 / ZM4 / CP4), this protein is 3-dehydroquinate synthase.